Here is a 427-residue protein sequence, read N- to C-terminus: Large ribosomal subunit protein uL4 (427 aa).

Ala2 is modified (N-acetylalanine). Position 14 is an N6-acetyllysine (Lys14). Arg97 bears the Omega-N-methylarginine mark. Position 106 is an N6-acetyllysine (Lys106). A Glycyl lysine isopeptide (Lys-Gly) (interchain with G-Cter in SUMO2) cross-link involves residue Lys239. Residue Lys259 is modified to N6-acetyllysine. Thr266 is subject to Phosphothreonine. Phosphoserine is present on residues Ser290 and Ser295. Arg300 is modified (citrulline). A Glycyl lysine isopeptide (Lys-Gly) (interchain with G-Cter in SUMO2) cross-link involves residue Lys327. Lys333 and Lys353 each carry N6-acetyllysine. The residue at position 364 (Lys364) is an N6-acetyllysine; alternate. Residue Lys364 forms a Glycyl lysine isopeptide (Lys-Gly) (interchain with G-Cter in SUMO1); alternate linkage. Residue Ser365 is modified to Phosphoserine. Positions 369 to 427 (AAVAGKKPVVGKKGKKAAVGVKKQKKPLVGKKAAATKKPAPEKKPAEKKPTTEEKKPAA) are disordered. Positions 377–397 (VVGKKGKKAAVGVKKQKKPLV) are enriched in basic residues. Basic and acidic residues predominate over residues 407-427 (PAPEKKPAEKKPTTEEKKPAA).

Belongs to the universal ribosomal protein uL4 family. In terms of assembly, component of the large ribosomal subunit. May bind IPO9 with low affinity. Interacts with RBM3. In terms of processing, citrullinated by PADI4.

The protein resides in the cytoplasm. Its function is as follows. Component of the large ribosomal subunit. The ribosome is a large ribonucleoprotein complex responsible for the synthesis of proteins in the cell. This Pongo abelii (Sumatran orangutan) protein is Large ribosomal subunit protein uL4 (RPL4).